A 325-amino-acid polypeptide reads, in one-letter code: Cyclic AMP-responsive element-binding protein 1 (325 aa).

2 stretches are compositionally biased toward polar residues: residues 1–11 (MESGAENQQSG) and 18–27 (AESQQMTVQA). Disordered stretches follow at residues 1–27 (MESGAENQQSGDAAVTEAESQQMTVQA) and 92–111 (SEDSQESVDSVTDSQKRREI). A KID domain is found at 85–144 (QISTIAESEDSQESVDSVTDSQKRREILSRRPSYRKILNDLSSDAPGVPRIEEEKSEEET). Serine 117 bears the Phosphoserine; by CaMK1, CaMK2, CaMK4, PKB/AKT1 or PKB/AKT2, RPS6KA3, RPS6KA4, RPS6KA5 and SGK1 mark. Residue lysine 120 forms a Glycyl lysine isopeptide (Lys-Gly) (interchain with G-Cter in SUMO2) linkage. Residues 124-146 (DLSSDAPGVPRIEEEKSEEETSA) form a disordered region. The residue at position 126 (serine 126) is a Phosphoserine; by CaMK2. A Phosphoserine; by HIPK2 modification is found at serine 255. The bZIP domain occupies 267-325 (ARKREVRLMKNREAARECRRKKKEYVKCLENRVAVLENQNKTLIEELKALKDLYCHKSD). Residues 268–293 (RKREVRLMKNREAARECRRKKKEYVK) are basic motif. Residues lysine 269 and lysine 288 each participate in a glycyl lysine isopeptide (Lys-Gly) (interchain with G-Cter in SUMO1) cross-link. The tract at residues 295 to 316 (LENRVAVLENQNKTLIEELKAL) is leucine-zipper.

It belongs to the bZIP family. Interacts with PPRC1. Binds DNA as a dimer. This dimer is stabilized by magnesium ions. Interacts, through the bZIP domain, with the coactivators CRTC1/TORC1, CRTC2/TORC2 and CRTC3/TORC3. When phosphorylated on Ser-117, binds CREBBP. Interacts with CREBL2; regulates CREB1 phosphorylation, stability and transcriptional activity. Interacts (phosphorylated form) with TOX3. Interacts with ARRB1. Binds to HIPK2. Interacts with SGK1. Interacts with TSSK4; this interaction facilitates phosphorylation on Ser-117. Forms a complex with KMT2A and CREBBP. Interacts with TOX4; CREB1 is required for full induction of TOX4-dependent activity and the interaction is increased by cAMP and inhibited by insulin. Sumoylated with SUMO1. Sumoylation on Lys-288, but not on Lys-269, is required for nuclear localization of this protein. Sumoylation is enhanced under hypoxia, promoting nuclear localization and stabilization. Post-translationally, stimulated by phosphorylation. Phosphorylation of both Ser-117 and Ser-126 in the SCN regulates the activity of CREB and participates in circadian rhythm generation. Phosphorylation of Ser-117 allows CREBBP binding. Phosphorylated upon calcium influx by CaMK4 and CaMK2 on Ser-117. CaMK4 is much more potent than CaMK2 in activating CREB. Phosphorylated by CaMK2 on Ser-126. Phosphorylation of Ser-126 blocks CREB-mediated transcription even when Ser-117 is phosphorylated. Phosphorylated by CaMK1. Phosphorylation of Ser-255 by HIPK2 in response to genotoxic stress promotes CREB1 activity, facilitating the recruitment of the coactivator CBP. Phosphorylated at Ser-117 by RPS6KA3, RPS6KA4 and RPS6KA5 in response to mitogenic or stress stimuli. CREBL2 positively regulates phosphorylation at Ser-117 thereby stimulating CREB1 transcriptional activity. In liver, phosphorylation is induced by fasting or glucagon in a circadian fashion. Phosphorylated by TSSK4 on Ser-117.

Its subcellular location is the nucleus. In terms of biological role, phosphorylation-dependent transcription factor that stimulates transcription upon binding to the DNA cAMP response element (CRE), a sequence present in many viral and cellular promoters. Transcription activation is enhanced by the TORC coactivators which act independently of Ser-117 phosphorylation. Involved in different cellular processes including the synchronization of circadian rhythmicity and the differentiation of adipose cells. Regulates the expression of apoptotic and inflammatory response factors in cardiomyocytes in response to ERFE-mediated activation of AKT signaling. This chain is Cyclic AMP-responsive element-binding protein 1 (CREB1), found in Bos taurus (Bovine).